The primary structure comprises 352 residues: tRNA pseudouridine synthase D (352 aa).

Asp81 (nucleophile) is an active-site residue. The TRUD domain maps to 158–306 (GVPNYFGQQR…RHERRTLLLK (149 aa)).

The protein belongs to the pseudouridine synthase TruD family.

The catalysed reaction is uridine(13) in tRNA = pseudouridine(13) in tRNA. Functionally, responsible for synthesis of pseudouridine from uracil-13 in transfer RNAs. The protein is tRNA pseudouridine synthase D of Photobacterium profundum (strain SS9).